The primary structure comprises 206 residues: Adenylate kinase (206 aa).

10 to 15 (GAGKGT) provides a ligand contact to ATP. The NMP stretch occupies residues 30-59 (STGDMLRAAVAAGTPVGLKAKDIMASGGLV). Residues Thr31, Arg36, 57-59 (GLV), 85-88 (GFPR), and Gln92 each bind AMP. Residues 126-142 (NRVAETTARGEQVRADD) form an LID region. Arg127 contributes to the ATP binding site. Residues Arg139 and Arg150 each coordinate AMP. Met178 serves as a coordination point for ATP.

Belongs to the adenylate kinase family. Monomer.

The protein localises to the cytoplasm. It carries out the reaction AMP + ATP = 2 ADP. Its pathway is purine metabolism; AMP biosynthesis via salvage pathway; AMP from ADP: step 1/1. Its function is as follows. Catalyzes the reversible transfer of the terminal phosphate group between ATP and AMP. Plays an important role in cellular energy homeostasis and in adenine nucleotide metabolism. This is Adenylate kinase from Nitrobacter winogradskyi (strain ATCC 25391 / DSM 10237 / CIP 104748 / NCIMB 11846 / Nb-255).